The following is a 363-amino-acid chain: MNTWFLNVVDPLHQWFLGFGDIGVVLWTVLKILMIAIPLIVSVAFYVVWERKLIGWMHVRHGPMYVGMGLFQAFADVFKLLFKEVLYPSKAHKVIFVIAPLLTLAPSFAAWAVVPFDTKLVLSNANVGLLYLLAMTSLGVYGIILAGWASNSKYAFLGAMRSAAQVVSYEIAMGFALVGVMIAAGSLNLSQIVMAQAGSSGFFDWFLIPLFPLFIVYWVSGVAETNRSPFDVVEGESEIVAGHMVEYSGSVFALFFLAEYANMILVSFLISIFFLGGWLSPIQGWVSGQVSPLIDWVWNGGWPWLLLKVLFFASAYIWFRASFPRYRYDQIMRLGWKVFIPLTIVWIAVTALMVFSGVIQKGV.

A run of 10 helical transmembrane segments spans residues V29 to W49, G62 to F82, V94 to V114, V127 to G147, V166 to S186, F202 to V222, I239 to L257, I264 to V286, L293 to A313, and F339 to I359.

The protein belongs to the complex I subunit 1 family. In terms of assembly, NDH-1 is composed of 14 different subunits. Subunits NuoA, H, J, K, L, M, N constitute the membrane sector of the complex.

The protein localises to the cell inner membrane. It catalyses the reaction a quinone + NADH + 5 H(+)(in) = a quinol + NAD(+) + 4 H(+)(out). Its function is as follows. NDH-1 shuttles electrons from NADH, via FMN and iron-sulfur (Fe-S) centers, to quinones in the respiratory chain. The immediate electron acceptor for the enzyme in this species is believed to be ubiquinone. Couples the redox reaction to proton translocation (for every two electrons transferred, four hydrogen ions are translocated across the cytoplasmic membrane), and thus conserves the redox energy in a proton gradient. This subunit may bind ubiquinone. This Xylella fastidiosa (strain M12) protein is NADH-quinone oxidoreductase subunit H.